Consider the following 423-residue polypeptide: Histidine--tRNA ligase (423 aa).

This sequence belongs to the class-II aminoacyl-tRNA synthetase family. As to quaternary structure, homodimer.

The protein resides in the cytoplasm. The enzyme catalyses tRNA(His) + L-histidine + ATP = L-histidyl-tRNA(His) + AMP + diphosphate + H(+). The polypeptide is Histidine--tRNA ligase (hisS) (Mycobacterium bovis (strain ATCC BAA-935 / AF2122/97)).